The chain runs to 130 residues: Ribosome-binding factor A (130 aa).

The protein belongs to the RbfA family. Monomer. Binds 30S ribosomal subunits, but not 50S ribosomal subunits or 70S ribosomes.

It localises to the cytoplasm. Its function is as follows. One of several proteins that assist in the late maturation steps of the functional core of the 30S ribosomal subunit. Associates with free 30S ribosomal subunits (but not with 30S subunits that are part of 70S ribosomes or polysomes). Required for efficient processing of 16S rRNA. May interact with the 5'-terminal helix region of 16S rRNA. The protein is Ribosome-binding factor A of Methylibium petroleiphilum (strain ATCC BAA-1232 / LMG 22953 / PM1).